A 250-amino-acid polypeptide reads, in one-letter code: MKIIQTENYQSMSKLASQHVINTIKQLNKPVLGLATGSTPEGLYQHLIKAYRMHQISFANVSTFNLDEYVGLHKEDKNSYHYYMQKFLFNHVDIPYKNIHLPNGIAKDLSVECTSYEDRIQQAGGIHIQVLGIGRNGHIGFNEPGTSFESQTHVVDLDESTRNANARFFDSIDEVPNQAITMGIQSIMRAKEILLLVSGSEKAEALEKLVNGNVSEEFPASILQTHQNVKIIADKAALQDISYHHFSETM.

Asp-67 (proton acceptor; for enolization step) is an active-site residue. Catalysis depends on Asn-136, which acts as the For ring-opening step. The active-site Proton acceptor; for ring-opening step is His-138. Glu-143 serves as the catalytic For ring-opening step.

This sequence belongs to the glucosamine/galactosamine-6-phosphate isomerase family. NagB subfamily.

It carries out the reaction alpha-D-glucosamine 6-phosphate + H2O = beta-D-fructose 6-phosphate + NH4(+). Its pathway is amino-sugar metabolism; N-acetylneuraminate degradation; D-fructose 6-phosphate from N-acetylneuraminate: step 5/5. Its function is as follows. Catalyzes the reversible isomerization-deamination of glucosamine 6-phosphate (GlcN6P) to form fructose 6-phosphate (Fru6P) and ammonium ion. The chain is Glucosamine-6-phosphate deaminase from Oceanobacillus iheyensis (strain DSM 14371 / CIP 107618 / JCM 11309 / KCTC 3954 / HTE831).